Consider the following 345-residue polypeptide: Protein RecA (345 aa).

65-72 is an ATP binding site; it reads GPESSGKT.

The protein belongs to the RecA family.

It localises to the cytoplasm. Its function is as follows. Can catalyze the hydrolysis of ATP in the presence of single-stranded DNA, the ATP-dependent uptake of single-stranded DNA by duplex DNA, and the ATP-dependent hybridization of homologous single-stranded DNAs. It interacts with LexA causing its activation and leading to its autocatalytic cleavage. The polypeptide is Protein RecA (Stenotrophomonas maltophilia (strain R551-3)).